Consider the following 908-residue polypeptide: Protein O-mannosyltransferase 1 (908 aa).

Disordered stretches follow at residues 1 to 85 (MYNN…SAIN) and 115 to 160 (GSVE…SGSR). The span at 21 to 31 (QRRKTTTRSRS) shows a compositional bias: basic residues. 2 stretches are compositionally biased toward polar residues: residues 39 to 54 (CTSENVIEKNQTNGAQ) and 132 to 149 (LTATPTTTPKQASPSPTI). A helical transmembrane segment spans residues 190–210 (FTVNLSIDLFSWTLFLLAFCT). Asn-265 carries an N-linked (GlcNAc...) asparagine glycan. 5 helical membrane passes run 279-299 (VPIFWFRFIPALCGSLLAPAV), 311-328 (WAAALGGLLVVLDNSLLT), 331-351 (RFVLMESMLLLASTLGIACLL), 370-390 (AGVLLACAGAVKYIGFLALAL), and 418-438 (LSRLLLFVGIPIAVYIGVFYV). 3 consecutive MIR domains span residues 473-534 (PLAV…VKRP), 545-602 (PDVI…VEIL), and 608-664 (GDSW…VEEH). 4 helical membrane-spanning segments follow: residues 749-769 (VLIWYTASAGILVYATLLAFY), 788-808 (FLMAGDTFFVGYMMHYLPYYF), 813-833 (LFLHNYLPAFVFKLLLLCFVV), and 857-877 (LALLLWLLAVGSVFVKFLPLS).

Belongs to the glycosyltransferase 39 family. In terms of assembly, interacts with tw/POMT2.

Its subcellular location is the endoplasmic reticulum membrane. The catalysed reaction is a di-trans,poly-cis-dolichyl beta-D-mannosyl phosphate + L-seryl-[protein] = 3-O-(alpha-D-mannosyl)-L-seryl-[protein] + a di-trans,poly-cis-dolichyl phosphate + H(+). It catalyses the reaction a di-trans,poly-cis-dolichyl beta-D-mannosyl phosphate + L-threonyl-[protein] = 3-O-(alpha-D-mannosyl)-L-threonyl-[protein] + a di-trans,poly-cis-dolichyl phosphate + H(+). It participates in protein modification; protein glycosylation. Rt/POMT1 and tw/POMT2 function as a protein O-mannosyltransferase in association with each other to generate and maintain normal muscle development. The sequence is that of Protein O-mannosyltransferase 1 from Drosophila pseudoobscura pseudoobscura (Fruit fly).